The sequence spans 480 residues: Coronin-2B (480 aa).

WD repeat units follow at residues 29–77 (HCFD…GRIE), 78–127 (PNYP…RNMT), 128–170 (EALL…LDVG), 171–212 (EPVK…PRSG), 213–259 (RVLQ…EDLS), 260–305 (MPLI…TEKP), and 306–345 (YLSY…KLVT). Residues 436–479 (NELLRMFFRQQDEIRRLKEELAQKDIRIRQLQLELKNLRNSPKN) are a coiled coil.

Belongs to the WD repeat coronin family. Binds to F-actin and to vinculin. As to expression, expressed predominantly in brain.

Its subcellular location is the cytoplasm. It localises to the cytoskeleton. In terms of biological role, may play a role in the reorganization of neuronal actin structure. The chain is Coronin-2B (CORO2B) from Homo sapiens (Human).